The chain runs to 327 residues: DNA-directed RNA polymerase subunit alpha (327 aa).

Positions 1 to 233 (MVREKVKVST…NLFIPFLHVE (233 aa)) are alpha N-terminal domain (alpha-NTD). The alpha C-terminal domain (alpha-CTD) stretch occupies residues 267-327 (LAFQYIFIDQ…KKILDILEKK (61 aa)).

The protein belongs to the RNA polymerase alpha chain family. In plastids the minimal PEP RNA polymerase catalytic core is composed of four subunits: alpha, beta, beta', and beta''. When a (nuclear-encoded) sigma factor is associated with the core the holoenzyme is formed, which can initiate transcription.

The protein localises to the plastid. The protein resides in the chloroplast. It catalyses the reaction RNA(n) + a ribonucleoside 5'-triphosphate = RNA(n+1) + diphosphate. DNA-dependent RNA polymerase catalyzes the transcription of DNA into RNA using the four ribonucleoside triphosphates as substrates. The chain is DNA-directed RNA polymerase subunit alpha from Crucihimalaya wallichii (Rock-cress).